We begin with the raw amino-acid sequence, 206 residues long: Endoplasmic reticulum transmembrane protein YET-like (206 aa).

Residues 1–2 (ME) are Lumenal-facing. A helical membrane pass occupies residues 3 to 23 (FLMTLVFLVLLVEIVFCTFFM). The Cytoplasmic segment spans residues 24–46 (LPVSMHLRKNVYNKLDKLFGGQN). Residues 47-67 (AKIFLKVLALLVIIVFCDSIV) traverse the membrane as a helical segment. The Lumenal portion of the chain corresponds to 68 to 101 (NSYNINKKLHTPELTGAKFDRQNEYTRMFRYQRN). Residues 102 to 122 (SYICGFCLYLFFLIYRSQGII) form a helical membrane-spanning segment. Topologically, residues 123–206 (SQLSNVEASK…KKPKTQKKDD (84 aa)) are cytoplasmic. The stretch at 140-198 (KNNLNTVETLLSENEKLKTEIKDLKKMEKEHKAMKSQAENTTKEYLKLQEEYNQLLGKK) forms a coiled coil. The Di-lysine motif signature appears at 203–206 (KKDD).

Belongs to the BCAP29/BCAP31 family.

It is found in the endoplasmic reticulum membrane. May play a role in anterograde transport of membrane proteins from the endoplasmic reticulum to the Golgi. The protein is Endoplasmic reticulum transmembrane protein YET-like of Dictyostelium discoideum (Social amoeba).